A 474-amino-acid polypeptide reads, in one-letter code: ATP synthase subunit beta 2 (474 aa).

157 to 164 (GGAGVGKT) provides a ligand contact to ATP.

This sequence belongs to the ATPase alpha/beta chains family. In terms of assembly, F-type ATPases have 2 components, CF(1) - the catalytic core - and CF(0) - the membrane proton channel. CF(1) has five subunits: alpha(3), beta(3), gamma(1), delta(1), epsilon(1). CF(0) has three main subunits: a(1), b(2) and c(9-12). The alpha and beta chains form an alternating ring which encloses part of the gamma chain. CF(1) is attached to CF(0) by a central stalk formed by the gamma and epsilon chains, while a peripheral stalk is formed by the delta and b chains.

Its subcellular location is the cell inner membrane. It carries out the reaction ATP + H2O + 4 H(+)(in) = ADP + phosphate + 5 H(+)(out). Functionally, produces ATP from ADP in the presence of a proton gradient across the membrane. The catalytic sites are hosted primarily by the beta subunits. The sequence is that of ATP synthase subunit beta 2 from Polaromonas naphthalenivorans (strain CJ2).